A 364-amino-acid chain; its full sequence is D-alanine--D-alanine ligase (364 aa).

One can recognise an ATP-grasp domain in the interval 145–354 (KMAFEQAGLP…FPELVDKLVQ (210 aa)). 181 to 236 (EASLGYPCFVKPANLGSSVGISKVRSRQELEDALDNAANYDRRIIIEAGVAAREVE) contacts ATP. Positions 307, 321, and 323 each coordinate Mg(2+).

This sequence belongs to the D-alanine--D-alanine ligase family. The cofactor is Mg(2+). Mn(2+) serves as cofactor.

It is found in the cytoplasm. It catalyses the reaction 2 D-alanine + ATP = D-alanyl-D-alanine + ADP + phosphate + H(+). Its pathway is cell wall biogenesis; peptidoglycan biosynthesis. Its function is as follows. Cell wall formation. The sequence is that of D-alanine--D-alanine ligase from Nostoc sp. (strain PCC 7120 / SAG 25.82 / UTEX 2576).